A 295-amino-acid chain; its full sequence is Taste receptor type 2 member 120 (295 aa).

Topologically, residues 1-5 (MNLVE) are extracellular. A helical membrane pass occupies residues 6-26 (WIVTIIMMTEFLLGNCANVFI). The Cytoplasmic segment spans residues 27 to 45 (TIVNFIDCVKRRKISSADR). A helical membrane pass occupies residues 46–66 (IITAIAIFRIGLLWAMLTNWH). Over 67-80 (SHVFTPDTDNLQMR) the chain is Extracellular. A helical transmembrane segment spans residues 81-101 (VFGGITWAITNHFTTWLGTIL). The Cytoplasmic segment spans residues 102-127 (SMFYLFKIANFSNSLFLHLKRKLDNV). The chain crosses the membrane as a helical span at residues 128-148 (LLVIFLGSSLFLVAYLGMVNI). Residues 149 to 177 (KKIAWMSIHEGNVTTKSKLKHVTSITNML) are Extracellular-facing. N-linked (GlcNAc...) asparagine glycosylation occurs at N160. Residues 178 to 198 (LFSLINIVPFGISLNCVLLLI) form a helical membrane-spanning segment. The Cytoplasmic portion of the chain corresponds to 199 to 228 (YSLSKHLKNMKFYGKGCQDQSTMVHIKALQ). A helical membrane pass occupies residues 229-249 (TVVSFLLLYATYSSCVIISGW). At 250–255 (SLQNAP) the chain is on the extracellular side. The helical transmembrane segment at 256-276 (VFLFCVTIGSFYPAGHSCILI) threads the bilayer. Topologically, residues 277-295 (WGNQKLKQVFLLLLRQMRC) are cytoplasmic.

It belongs to the G-protein coupled receptor T2R family.

It is found in the membrane. In terms of biological role, putative taste receptor which may play a role in the perception of bitterness. The protein is Taste receptor type 2 member 120 of Mus musculus (Mouse).